The primary structure comprises 406 residues: Calsequestrin-1 (406 aa).

An N-terminal signal peptide occupies residues 1 to 34; it reads MRATDRMGARAVSKLRLALLFVLVLGTPRSGVQG. Tyr43 carries the phosphotyrosine modification. Ser81 bears the Phosphoserine mark. Thr124 bears the Phosphothreonine mark. Ser216 carries the phosphoserine modification. N-linked (GlcNAc...) asparagine glycosylation is present at Asn350. The segment at 382–406 is disordered; sequence EGEINTEDDDDDDDDDDDDDDDDDD.

This sequence belongs to the calsequestrin family. As to quaternary structure, monomer; increases in response to a depletion of intracellular calcium. Homodimer. Homotetramer and homopolymer. Can form linear homooligomers. Ca(2+) ions promote oligomerization. Interacts (via C-terminal end and preferentially with the monomeric form) with STIM1; this interaction increases in response to a depletion of intracellular calcium, decreases both STIM1 aggregation and clustering, interaction of STIM1 with ORAI1 and store-operated Ca(2+) entry (SOCE) activity. Interacts with ASPH and TRDN. In terms of processing, N-glycosylated. As to expression, detected in skeletal muscle and in smooth muscle from vas deferens, aorta and stomach (at protein level).

The protein resides in the endoplasmic reticulum. It is found in the sarcoplasmic reticulum. The protein localises to the sarcoplasmic reticulum lumen. It localises to the sarcoplasmic reticulum membrane. Its subcellular location is the mitochondrion matrix. Functionally, calsequestrin is a high-capacity, moderate affinity, calcium-binding protein and thus acts as an internal calcium store in muscle. Calcium ions are bound by clusters of acidic residues at the protein surface, often at the interface between subunits. Can bind around 80 Ca(2+) ions. Regulates the release of lumenal Ca(2+) via the calcium release channel RYR1; this plays an important role in triggering muscle contraction. Negatively regulates store-operated Ca(2+) entry (SOCE) activity. The protein is Calsequestrin-1 (Casq1) of Rattus norvegicus (Rat).